A 296-amino-acid chain; its full sequence is D-alanine--D-alanine ligase (296 aa).

Positions 103–293 constitute an ATP-grasp domain; that stretch reads KEILMHYRMP…FDSFVKRIIE (191 aa). 129 to 180 is a binding site for ATP; the sequence is ISFPVAVKPSSGGSSIATFKVKSIQELKHAYEEASKYGEVMIEQWVTGKEIT. Residues aspartate 247, glutamate 260, and asparagine 262 each contribute to the Mg(2+) site.

It belongs to the D-alanine--D-alanine ligase family. It depends on Mg(2+) as a cofactor. Mn(2+) serves as cofactor.

Its subcellular location is the cytoplasm. It carries out the reaction 2 D-alanine + ATP = D-alanyl-D-alanine + ADP + phosphate + H(+). It functions in the pathway cell wall biogenesis; peptidoglycan biosynthesis. Functionally, cell wall formation. This Francisella tularensis subsp. tularensis (strain WY96-3418) protein is D-alanine--D-alanine ligase.